Reading from the N-terminus, the 379-residue chain is uncharacterized protein (379 aa).

Disordered regions lie at residues 1 to 37 (MSSI…SGQT), 130 to 150 (VRYS…LSPE), and 332 to 379 (NPPI…RGSR).

This sequence belongs to the chlamydial CPn_0499/CT_392/TC_0671 family.

This is an uncharacterized protein from Chlamydia muridarum (strain MoPn / Nigg).